The following is a 149-amino-acid chain: Ribosome-binding factor A (149 aa).

The disordered stretch occupies residues 123–149; it reads LAKLREGAAPAGDADPYKTSSKSESEE.

The protein belongs to the RbfA family. Monomer. Binds 30S ribosomal subunits, but not 50S ribosomal subunits or 70S ribosomes.

It localises to the cytoplasm. One of several proteins that assist in the late maturation steps of the functional core of the 30S ribosomal subunit. Associates with free 30S ribosomal subunits (but not with 30S subunits that are part of 70S ribosomes or polysomes). Required for efficient processing of 16S rRNA. May interact with the 5'-terminal helix region of 16S rRNA. The chain is Ribosome-binding factor A from Corynebacterium glutamicum (strain ATCC 13032 / DSM 20300 / JCM 1318 / BCRC 11384 / CCUG 27702 / LMG 3730 / NBRC 12168 / NCIMB 10025 / NRRL B-2784 / 534).